A 382-amino-acid polypeptide reads, in one-letter code: Cell division protein FtsZ (382 aa).

Residues 21-25, 108-110, Glu139, Arg143, and Asp187 contribute to the GTP site; these read GGGNN and GTG. The segment at 320–382 is disordered; sequence KDVTKPQRPS…TFLRNRNKRG (63 aa). Over residues 326–341 the composition is skewed to polar residues; that stretch reads QRPSLNQSIKTHNQSV. Residues 342 to 351 show a composition bias toward basic and acidic residues; it reads PKREPKREEP. The span at 352 to 365 shows a compositional bias: polar residues; sequence QQQNTVSRHTSQPA.

It belongs to the FtsZ family. As to quaternary structure, homodimer. Polymerizes to form a dynamic ring structure in a strictly GTP-dependent manner. Interacts directly with several other division proteins. Interacts with FtsA. Interacts with Phi29 DNA replication protein 1. Interacts with the cell division inhibitor MciZ.

Its subcellular location is the cytoplasm. Its activity is regulated as follows. During sporulation, is negatively regulated by MciZ, which binds to FtsZ and inhibits its polymerization and the formation of the Z ring. Essential cell division protein that forms a contractile ring structure (Z ring) at the future cell division site. The regulation of the ring assembly controls the timing and the location of cell division. One of the functions of the FtsZ ring is to recruit other cell division proteins to the septum to produce a new cell wall between the dividing cells. Binds GTP and shows GTPase activity. In Bacillus subtilis (strain 168), this protein is Cell division protein FtsZ.